The following is a 252-amino-acid chain: Triosephosphate isomerase (252 aa).

10–12 (NWK) serves as a coordination point for substrate. His-96 acts as the Electrophile in catalysis. The Proton acceptor role is filled by Glu-168. Residues Gly-174, Ser-214, and 235–236 (GG) contribute to the substrate site.

Belongs to the triosephosphate isomerase family. In terms of assembly, homodimer.

It is found in the cytoplasm. The catalysed reaction is D-glyceraldehyde 3-phosphate = dihydroxyacetone phosphate. It functions in the pathway carbohydrate biosynthesis; gluconeogenesis. Its pathway is carbohydrate degradation; glycolysis; D-glyceraldehyde 3-phosphate from glycerone phosphate: step 1/1. Functionally, involved in the gluconeogenesis. Catalyzes stereospecifically the conversion of dihydroxyacetone phosphate (DHAP) to D-glyceraldehyde-3-phosphate (G3P). In Streptococcus equi subsp. zooepidemicus (strain MGCS10565), this protein is Triosephosphate isomerase.